The primary structure comprises 205 residues: Small ribosomal subunit protein uS4 (205 aa).

Residues 21–47 (GRPKSPFNKRDYGPGQHGQGRKGKPSD) form a disordered region. One can recognise an S4 RNA-binding domain in the interval 94-154 (RRLDSVVYRA…DKSKQLAIID (61 aa)).

This sequence belongs to the universal ribosomal protein uS4 family. Part of the 30S ribosomal subunit. Contacts protein S5. The interaction surface between S4 and S5 is involved in control of translational fidelity.

In terms of biological role, one of the primary rRNA binding proteins, it binds directly to 16S rRNA where it nucleates assembly of the body of the 30S subunit. Its function is as follows. With S5 and S12 plays an important role in translational accuracy. The protein is Small ribosomal subunit protein uS4 of Pelagibacter ubique (strain HTCC1062).